A 188-amino-acid polypeptide reads, in one-letter code: MHFTATVLLAFGMSMDAFAASIGKGATLHKPKFSEALRTGLIFGAVETLTPLIGWGLGILASKFVLEWNHWIAFVLLIFLGGRMIIEGIRGGSDEDETPLRRHSFWLLVTTAIATSLDAMAVGVGLAFLQVNIIATALAIGCATLIMSTLGMMIGRFIGPMLGKRAEILGGVVLIGIGVQILWTHFHG.

6 helical membrane-spanning segments follow: residues 3 to 23, 41 to 61, 66 to 86, 106 to 128, 143 to 163, and 168 to 188; these read FTAT…ASIG, LIFG…GILA, LEWN…RMII, WLLV…GLAF, ATLI…PMLG, and ILGG…HFHG.

The protein belongs to the MntP (TC 9.B.29) family.

The protein resides in the cell inner membrane. In terms of biological role, probably functions as a manganese efflux pump. This is Probable manganese efflux pump MntP from Salmonella typhimurium (strain LT2 / SGSC1412 / ATCC 700720).